Here is a 645-residue protein sequence, read N- to C-terminus: MSVINCEEVKRDEFHTEKYYESYNIFGAHIVTEDEMRGVRFTVWAPHAKAMSVVGDFNEWDYEQHKMLQVTEEGIWSLFIPHIEEREIYKYAIETMAGDVIFKADPYAVYAEVRPNTASVVFDIKGYEWNDKNWSRKKKKKSVYKEAMTVYELHFGSWKKKEDGTLYSYREMAEELIPYVVEHQFTHIEIMPLVEHPYDRSWGYQGTGYYAATSRFGTPHDLMHFVDECHKYGIGVILDWVPGHFCKDAHGLYLFDGTPTYEYKDKDVQENPVWGTVNFDLGKREVRNFLISNALFWMRYFHIDGFRVDAVANMLYWNKEGQEQSNEHAVSFLRELNEAVFAEDEDFLMTAEDSTAWPLVTAPTYEGGLGFNYKWNMGWMNDVLKYMECAPEYRKYIHDKMTFSLLYAYSENFILPLSHDEVVHGKKSLLNKMPGDYWDKFAQLRLLYGYFFTHPGKKLLFMGGEFGQFDEWKDLEDLDWNLHDFEMHRYMHDYFKELIALYKRSKPLWQLDHSREGFQWIDANNNEQSIFSFIRQGDKQEDALVVVCNFTKATYENYKVGVPDFEYYNEVLNSDAEQYGGSGQVNKKRLKTFQEPYHNQTAHVEITIPPFGVSILRPVKTRKGSKKQDGSKTKVRSNVTSRGKR.

The Nucleophile role is filled by Asp309. The active-site Proton donor is Glu352. The interval 619 to 645 (VKTRKGSKKQDGSKTKVRSNVTSRGKR) is disordered. The segment covering 636-645 (RSNVTSRGKR) has biased composition (polar residues).

Belongs to the glycosyl hydrolase 13 family. GlgB subfamily. In terms of assembly, monomer.

It carries out the reaction Transfers a segment of a (1-&gt;4)-alpha-D-glucan chain to a primary hydroxy group in a similar glucan chain.. The protein operates within glycan biosynthesis; glycogen biosynthesis. Functionally, catalyzes the formation of the alpha-1,6-glucosidic linkages in glycogen by scission of a 1,4-alpha-linked oligosaccharide from growing alpha-1,4-glucan chains and the subsequent attachment of the oligosaccharide to the alpha-1,6 position. In Bacillus anthracis (strain CDC 684 / NRRL 3495), this protein is 1,4-alpha-glucan branching enzyme GlgB.